The following is a 222-amino-acid chain: ATP synthase F(0) complex subunit a (222 aa).

Helical transmembrane passes span 8–28 (FFYV…ILLP), 64–84 (WSLM…LGLL), 93–113 (QLTV…VPGF), 127–147 (QGTP…SLLI), 160–180 (ITAG…LSSI), and 197–219 (ILEL…LYLH).

This sequence belongs to the ATPase A chain family. Component of the ATP synthase complex composed at least of ATP5F1A/subunit alpha, ATP5F1B/subunit beta, ATP5MC1/subunit c (homooctomer), MT-ATP6/subunit a, MT-ATP8/subunit 8, ATP5ME/subunit e, ATP5MF/subunit f, ATP5MG/subunit g, ATP5MK/subunit k, ATP5MJ/subunit j, ATP5F1C/subunit gamma, ATP5F1D/subunit delta, ATP5F1E/subunit epsilon, ATP5PF/subunit F6, ATP5PB/subunit b, ATP5PD/subunit d, ATP5PO/subunit OSCP. ATP synthase complex consists of a soluble F(1) head domain (subunits alpha(3) and beta(3)) - the catalytic core - and a membrane F(0) domain - the membrane proton channel (subunits c, a, 8, e, f, g, k and j). These two domains are linked by a central stalk (subunits gamma, delta, and epsilon) rotating inside the F1 region and a stationary peripheral stalk (subunits F6, b, d, and OSCP). Interacts with DNAJC30; interaction is direct.

Its subcellular location is the mitochondrion inner membrane. The catalysed reaction is H(+)(in) = H(+)(out). Its function is as follows. Subunit a, of the mitochondrial membrane ATP synthase complex (F(1)F(0) ATP synthase or Complex V) that produces ATP from ADP in the presence of a proton gradient across the membrane which is generated by electron transport complexes of the respiratory chain. ATP synthase complex consist of a soluble F(1) head domain - the catalytic core - and a membrane F(1) domain - the membrane proton channel. These two domains are linked by a central stalk rotating inside the F(1) region and a stationary peripheral stalk. During catalysis, ATP synthesis in the catalytic domain of F(1) is coupled via a rotary mechanism of the central stalk subunits to proton translocation. With the subunit c (ATP5MC1), forms the proton-conducting channel in the F(0) domain, that contains two crucial half-channels (inlet and outlet) that facilitate proton movement from the mitochondrial intermembrane space (IMS) into the matrix. Protons are taken up via the inlet half-channel and released through the outlet half-channel, following a Grotthuss mechanism. This is ATP synthase F(0) complex subunit a from Loxodonta africana (African elephant).